The chain runs to 267 residues: 5'-nucleotidase SurE (267 aa).

Residues Asp-9, Asp-10, Ser-40, and Asn-97 each coordinate a divalent metal cation.

It belongs to the SurE nucleotidase family. A divalent metal cation serves as cofactor.

It localises to the cytoplasm. The enzyme catalyses a ribonucleoside 5'-phosphate + H2O = a ribonucleoside + phosphate. In terms of biological role, nucleotidase that shows phosphatase activity on nucleoside 5'-monophosphates. The sequence is that of 5'-nucleotidase SurE from Helicobacter pylori (strain J99 / ATCC 700824) (Campylobacter pylori J99).